Reading from the N-terminus, the 271-residue chain is Mannosyl-3-phosphoglycerate phosphatase (271 aa).

D13 acts as the Nucleophile in catalysis. Residues D13, D15, and D214 each contribute to the Mg(2+) site.

It belongs to the HAD-like hydrolase superfamily. MPGP family. Requires Mg(2+) as cofactor.

The protein resides in the cytoplasm. The enzyme catalyses 2-O-(alpha-D-mannosyl)-3-phosphoglycerate + H2O = (2R)-2-O-(alpha-D-mannosyl)-glycerate + phosphate. This is Mannosyl-3-phosphoglycerate phosphatase (yedP) from Escherichia coli O6:H1 (strain CFT073 / ATCC 700928 / UPEC).